A 194-amino-acid chain; its full sequence is Adapter protein MecA 2 (194 aa).

The protein belongs to the MecA family. As to quaternary structure, homodimer.

Functionally, enables the recognition and targeting of unfolded and aggregated proteins to the ClpC protease or to other proteins involved in proteolysis. Also involved in Spx degradation by ClpC. Acts negatively in the development of competence by binding ComK and recruiting it to the ClpCP protease. When overexpressed, inhibits sporulation. In Bacillus subtilis (strain 168), this protein is Adapter protein MecA 2 (mecB).